The following is a 345-amino-acid chain: High mobility group protein 20A (345 aa).

Disordered stretches follow at residues 1–124 (MENT…TERP) and 167–198 (QYQN…VRGV). Polar residues-rich tracts occupy residues 32 to 48 (LSGS…PTLQ) and 57 to 67 (LQQSGEQQLGN). Positions 80–94 (TRRGGWTKGRKRKRS) are enriched in basic residues. Residues 101-169 (PKAPLTGYVR…RYTKELQQYQ (69 aa)) constitute a DNA-binding region (HMG box). Positions 112–124 (MNERREQLRTERP) are enriched in basic and acidic residues. Residues 167–180 (QYQNTDAYQTYSRK) show a composition bias toward polar residues. A coiled-coil region spans residues 227-290 (SKAREAELRQ…QHLQSVRQAL (64 aa)).

It is found in the nucleus. In terms of biological role, plays a role in neuronal differentiation. The sequence is that of High mobility group protein 20A (hmg20a) from Xenopus tropicalis (Western clawed frog).